The following is a 316-amino-acid chain: D-alanine--D-alanine ligase (316 aa).

Residues 129–316 enclose the ATP-grasp domain; the sequence is KYILQAAGIP…ALQAEFCRYP (188 aa). Residue 162–217 coordinates ATP; the sequence is EGSLLYPMFIKPANMGSSVGITKAENREELQNALQEAYRYDTRAIVEQGIEAREIE. Residues Asp-288, Glu-301, and Asn-303 each contribute to the Mg(2+) site.

This sequence belongs to the D-alanine--D-alanine ligase family. Requires Mg(2+) as cofactor. Mn(2+) is required as a cofactor.

Its subcellular location is the cytoplasm. It carries out the reaction 2 D-alanine + ATP = D-alanyl-D-alanine + ADP + phosphate + H(+). Its pathway is cell wall biogenesis; peptidoglycan biosynthesis. In terms of biological role, cell wall formation. In Enterococcus gallinarum, this protein is D-alanine--D-alanine ligase (ddl).